Reading from the N-terminus, the 41-residue chain is Photosystem I reaction center subunit IX (41 aa).

The chain crosses the membrane as a helical span at residues 7-27 (YLSTAPVVATGWFIVTAALLI).

It belongs to the PsaJ family.

It localises to the plastid. It is found in the chloroplast thylakoid membrane. In terms of biological role, may help in the organization of the PsaE and PsaF subunits. The chain is Photosystem I reaction center subunit IX from Tetradesmus obliquus (Green alga).